An 829-amino-acid chain; its full sequence is DNA ligase (829 aa).

NAD(+)-binding positions include 38 to 42 (DAEYD), 87 to 88 (SL), and Glu-127. The active-site N6-AMP-lysine intermediate is the Lys-129. Residues Arg-150, Glu-187, Lys-305, and Lys-329 each coordinate NAD(+). Residues Cys-455, Cys-458, Cys-473, and Cys-479 each contribute to the Zn(2+) site. A disordered region spans residues 534 to 564 (ETADKGSSENENGDAETVSGDLSKYNTQNGK). The BRCT domain occupies 752 to 829 (GINKAVAGKT…SEAELLTLLC (78 aa)).

This sequence belongs to the NAD-dependent DNA ligase family. LigA subfamily. Requires Mg(2+) as cofactor. Mn(2+) is required as a cofactor.

It catalyses the reaction NAD(+) + (deoxyribonucleotide)n-3'-hydroxyl + 5'-phospho-(deoxyribonucleotide)m = (deoxyribonucleotide)n+m + AMP + beta-nicotinamide D-nucleotide.. Functionally, DNA ligase that catalyzes the formation of phosphodiester linkages between 5'-phosphoryl and 3'-hydroxyl groups in double-stranded DNA using NAD as a coenzyme and as the energy source for the reaction. It is essential for DNA replication and repair of damaged DNA. The protein is DNA ligase of Neisseria gonorrhoeae (strain ATCC 700825 / FA 1090).